Reading from the N-terminus, the 475-residue chain is Cytosolic non-specific dipeptidase (475 aa).

The residue at position 58 (S58) is a Phosphoserine. H99 is a binding site for Mn(2+). Residue D101 is part of the active site. D132 contributes to the Mn(2+) binding site. The active-site Proton acceptor is the E166. Substrate-binding positions include 166–167 (EE), D195, and H228. Mn(2+) is bound by residues E167 and D195. Phosphoserine is present on S299. Residues T330, R343, S417, and H445 each coordinate substrate. Mn(2+) is bound at residue H445.

The protein belongs to the peptidase M20A family. Homodimer. It depends on Mn(2+) as a cofactor. Highly expressed in the parafascicular nucleus of the thalamus, tuberomammillary nucleus of the hypothalamus and the mitral cell layer of the olfactory bulb.

It is found in the cytoplasm. It catalyses the reaction Hydrolysis of dipeptides, preferentially hydrophobic dipeptides including prolyl amino acids.. The catalysed reaction is L-threonyl-L-threonine + H2O = 2 L-threonine. It carries out the reaction L-threonyl-L-serine + H2O = L-threonine + L-serine. The enzyme catalyses L-seryl-L-threonine + H2O = L-threonine + L-serine. It catalyses the reaction L-cysteinylglycine + H2O = L-cysteine + glycine. The catalysed reaction is L-alanyl-L-cysteine + H2O = L-cysteine + L-alanine. It carries out the reaction (S)-lactate + L-phenylalanine = N-[(S)-lactoyl]-L-phenylalanine + H2O. Its activity is regulated as follows. Inhibited by bestatin. In terms of biological role, catalyzes the peptide bond hydrolysis in dipeptides, displaying a non-redundant activity toward threonyl dipeptides. Mediates threonyl dipeptide catabolism in a tissue-specific way. Has high dipeptidase activity toward cysteinylglycine, an intermediate metabolite in glutathione metabolism. Metabolizes N-lactoyl-amino acids, both through hydrolysis to form lactic acid and amino acids, as well as through their formation by reverse proteolysis. Plays a role in the regulation of cell cycle arrest and apoptosis. This Mus musculus (Mouse) protein is Cytosolic non-specific dipeptidase (Cndp2).